A 620-amino-acid chain; its full sequence is MALLQIAEPGQSPQPHQRRLAVGIDLGTTNSLVAALRSGRSEPLPDAQGNVILPSAVRYLANGVEVGLGAREAAPSDPLNSILSVKRLMGRGLADVKQLGEQLPYRFVGGESHMPFIDTVQGPKSPVEVSADILKVLRQRAEDTLGGELVGAVITVPAYFDDAQRQATKDAAKLAGLNVLRLLNEPTAAAVAYGLDQHAEGVVAIFDLGGGTFDISILRLTAGVFEVLATGGDTALGGDDFDHAIAGWIIEQAGLSADLDPATQRLLLQTACAAKEALTDSEAVSVQHGAWQGELTRGAFEAMIEPMIARSLKACRRAVRDSGIELEEVGAVVMVGGSTRVPRVREAVGSLFGRTPLTSIDPDQVVAIGAAIQADTLAGNRREGGELLLLDVIPLSLGLETMGGLMEKVIPRNTTIPVARAQEFTTYKDGQSAMMIHVLQGERELISDCRSLARFELRGIPAMVAGAAKIRVTFQVDADGLLSVAARELGSGVESSIQVKPSYGLTDGEIARMLKDSFEHAGADKHARQLREHQVDAERLLEAVQGALDADGERLLSDDEREAIAFQMQELRDLLTGTDGAAIEQQTKRLSQVTDAFAARRLDSTVKAALAGRNLNEIEE.

It belongs to the heat shock protein 70 family.

Chaperone involved in the maturation of iron-sulfur cluster-containing proteins. Has a low intrinsic ATPase activity which is markedly stimulated by HscB. The sequence is that of Chaperone protein HscA homolog from Pseudomonas entomophila (strain L48).